The following is a 514-amino-acid chain: Adenylosuccinate synthetase 2, chloroplastic (514 aa).

Residues 1-56 (MAMAAAAAVASQGLLATSSQQQKKSSAKLICNAATFFSGKRLLWVKSCNNGAVGLR) constitute a chloroplast transit peptide. GTP is bound by residues 100–106 (GDEGKGK) and 128–130 (GHT). Catalysis depends on Asp101, which acts as the Proton acceptor. Mg(2+)-binding residues include Asp101 and Gly128. IMP contacts are provided by residues 101–104 (DEGK), 126–129 (NAGH), Thr218, Arg232, Gln312, Thr327, and Arg391. His129 acts as the Proton donor in catalysis. Residue 387–393 (TTTGRPR) participates in substrate binding. GTP is bound by residues Arg393, 419–421 (KLD), and 502–504 (GVG).

Belongs to the adenylosuccinate synthetase family. Homodimer. Mg(2+) is required as a cofactor.

It is found in the plastid. It localises to the chloroplast. The enzyme catalyses IMP + L-aspartate + GTP = N(6)-(1,2-dicarboxyethyl)-AMP + GDP + phosphate + 2 H(+). It participates in purine metabolism; AMP biosynthesis via de novo pathway; AMP from IMP: step 1/2. Its function is as follows. Plays an important role in the de novo pathway and in the salvage pathway of purine nucleotide biosynthesis. Catalyzes the first committed step in the biosynthesis of AMP from IMP. This is Adenylosuccinate synthetase 2, chloroplastic from Physcomitrium patens (Spreading-leaved earth moss).